The sequence spans 556 residues: Putative D-arabinono-1,4-lactone oxidase (556 aa).

In terms of domain architecture, FAD-binding PCMH-type spans 47–217 (FTSLPELYIQ…TEVTFKAVPA (171 aa)). Pros-8alpha-FAD histidine is present on H84.

The protein belongs to the oxygen-dependent FAD-linked oxidoreductase family. It depends on FAD as a cofactor.

Its subcellular location is the mitochondrion membrane. The enzyme catalyses D-arabinono-1,4-lactone + O2 = dehydro-D-arabinono-1,4-lactone + H2O2 + H(+). The protein operates within cofactor biosynthesis; D-erythroascorbate biosynthesis; dehydro-D-arabinono-1,4-lactone from D-arabinose: step 2/2. In Neurospora crassa (strain ATCC 24698 / 74-OR23-1A / CBS 708.71 / DSM 1257 / FGSC 987), this protein is Putative D-arabinono-1,4-lactone oxidase (alo-1).